The following is a 137-amino-acid chain: Transcription antitermination protein NusB (137 aa).

The protein belongs to the NusB family.

In terms of biological role, involved in transcription antitermination. Required for transcription of ribosomal RNA (rRNA) genes. Binds specifically to the boxA antiterminator sequence of the ribosomal RNA (rrn) operons. The sequence is that of Transcription antitermination protein NusB from Clavibacter michiganensis subsp. michiganensis (strain NCPPB 382).